The sequence spans 418 residues: N-acetylglucosamine-6-phosphate deacetylase (418 aa).

Glutamate 154 provides a ligand contact to a divalent metal cation. Residue 165 to 166 (CH) coordinates substrate. Histidine 223 and histidine 244 together coordinate a divalent metal cation. Residues 247-248 (NA), arginine 255, and 281-284 (DGIH) each bind substrate. Aspartate 306 serves as the catalytic Proton donor/acceptor. Residue 340-342 (TAG) coordinates substrate.

The protein belongs to the metallo-dependent hydrolases superfamily. NagA family. A divalent metal cation serves as cofactor.

The catalysed reaction is N-acetyl-D-glucosamine 6-phosphate + H2O = D-glucosamine 6-phosphate + acetate. The protein is N-acetylglucosamine-6-phosphate deacetylase of Caenorhabditis elegans.